A 284-amino-acid chain; its full sequence is MLIIETLPLLRQHIRRLRQEGKRVALVPTMGNLHDGHMKLVDEAKARADVVIVSIFVNPMQFDRPDDLVRYPRTLQEDCEKLNKRKVDYVFAPAVEEIYPHGLEGQTYVDVPGLSTMLEGASRPGHFRGVSTIVSKLFNLIQPDIACFGEKDFQQLALIRKMVADMSYDIEIVGVPIIRAKDGLALSSRNAYLTAEQRKIAPGLYNVMNSIAEKLIAGNRELQEIIAIAEQELNEKGFRADDIQIRDADTLQELTETSKRAVILAAAWLGQARLIDNQSVTLAQ.

30–37 (MGNLHDGH) provides a ligand contact to ATP. His37 serves as the catalytic Proton donor. (R)-pantoate is bound at residue Gln61. Beta-alanine is bound at residue Gln61. Position 149-152 (149-152 (GEKD)) interacts with ATP. Gln155 contacts (R)-pantoate. ATP contacts are provided by residues Ile178 and 186–189 (LSSR).

This sequence belongs to the pantothenate synthetase family. Homodimer.

It is found in the cytoplasm. It carries out the reaction (R)-pantoate + beta-alanine + ATP = (R)-pantothenate + AMP + diphosphate + H(+). Its pathway is cofactor biosynthesis; (R)-pantothenate biosynthesis; (R)-pantothenate from (R)-pantoate and beta-alanine: step 1/1. Its function is as follows. Catalyzes the condensation of pantoate with beta-alanine in an ATP-dependent reaction via a pantoyl-adenylate intermediate. This is Pantothenate synthetase from Salmonella heidelberg (strain SL476).